Here is a 338-residue protein sequence, read N- to C-terminus: tRNA N6-adenosine threonylcarbamoyltransferase (338 aa).

The Fe cation site is built by His-111 and His-115. Substrate-binding positions include 134-138 (LVSGG), Asp-167, Gly-180, and Asn-272. Asp-300 provides a ligand contact to Fe cation.

Belongs to the KAE1 / TsaD family. It depends on Fe(2+) as a cofactor.

The protein localises to the cytoplasm. It carries out the reaction L-threonylcarbamoyladenylate + adenosine(37) in tRNA = N(6)-L-threonylcarbamoyladenosine(37) in tRNA + AMP + H(+). Its function is as follows. Required for the formation of a threonylcarbamoyl group on adenosine at position 37 (t(6)A37) in tRNAs that read codons beginning with adenine. Is involved in the transfer of the threonylcarbamoyl moiety of threonylcarbamoyl-AMP (TC-AMP) to the N6 group of A37, together with TsaE and TsaB. TsaD likely plays a direct catalytic role in this reaction. The chain is tRNA N6-adenosine threonylcarbamoyltransferase from Shewanella baltica (strain OS223).